Here is a 264-residue protein sequence, read N- to C-terminus: Chanoclavine-I dehydrogenase easD (264 aa).

Residues 1 to 20 form the signal peptide; that stretch reads MASVSSKIFAITGGASGIGA. NADP(+) is bound by residues Ile-18, Asp-66, Arg-132, Tyr-169, Lys-173, and Thr-204. Tyr-169 acts as the Proton donor in catalysis. The active-site Lowers pKa of active site Tyr is the Lys-173.

The protein belongs to the short-chain dehydrogenases/reductases (SDR) family. Homotetramer.

It carries out the reaction chanoclavine-I + NAD(+) = chanoclavine-I aldehyde + NADH + H(+). Its pathway is alkaloid biosynthesis; ergot alkaloid biosynthesis. Its function is as follows. Chanoclavine-I dehydrogenase; part of the gene cluster that mediates the biosynthesis of fungal ergot alkaloid. DmaW catalyzes the first step of ergot alkaloid biosynthesis by condensing dimethylallyl diphosphate (DMAP) and tryptophan to form 4-dimethylallyl-L-tryptophan. The second step is catalyzed by the methyltransferase easF that methylates 4-dimethylallyl-L-tryptophan in the presence of S-adenosyl-L-methionine, resulting in the formation of 4-dimethylallyl-L-abrine. The catalase easC and the FAD-dependent oxidoreductase easE then transform 4-dimethylallyl-L-abrine to chanoclavine-I which is further oxidized by easD in the presence of NAD(+), resulting in the formation of chanoclavine-I aldehyde. Chanoclavine-I aldehyde is the precursor of ergoamides and ergopeptines in Clavicipitaceae, and clavine-type alcaloids such as fumiclavine in Trichocomaceae. However, the metabolites downstream of chanoclavine-I aldehyde in Arthrodermataceae have not been identified yet. The chain is Chanoclavine-I dehydrogenase easD from Arthroderma otae (strain ATCC MYA-4605 / CBS 113480) (Microsporum canis).